We begin with the raw amino-acid sequence, 244 residues long: Protein TIFY 10b (244 aa).

The Tify domain occupies 97–132 (QEPEKRQLTIFYGGKVLVFNDFPADKAKGLMQLASK). Positions 185–210 (PIARKASLHRFLEKRKDRLNAKTPYQ) match the Jas motif. The Nuclear localization signal signature appears at 187-194 (ARKASLHR). The segment at 193 to 244 (HRFLEKRKDRLNAKTPYQASPSDATPVKKEPESQPWLGLGPNAVVKPIERGQ) is disordered. The segment covering 194–204 (RFLEKRKDRLN) has biased composition (basic and acidic residues).

It belongs to the TIFY/JAZ family. In terms of processing, ubiquitinated. Targeted for degradation by the SCF(COI1) E3 ubiquitin ligase-proteasome pathway during jasmonate signaling.

It is found in the nucleus. Functionally, repressor of jasmonate responses. This is Protein TIFY 10b from Oryza sativa subsp. indica (Rice).